Consider the following 444-residue polypeptide: Argininosuccinate synthase (444 aa).

Residues 18–26 (AFSGGLDTS) and Ala44 each bind ATP. Tyr100 provides a ligand contact to L-citrulline. Residues Gly130 and Thr132 each contribute to the ATP site. The L-aspartate site is built by Thr132, Asn136, and Asp137. Asn136 is an L-citrulline binding site. Position 137 (Asp137) interacts with ATP. L-citrulline-binding residues include Arg140 and Ser193. Residue Asp195 participates in ATP binding. L-citrulline is bound by residues Thr202, Glu204, and Glu281.

It belongs to the argininosuccinate synthase family. Type 2 subfamily. As to quaternary structure, homotetramer.

The protein resides in the cytoplasm. The enzyme catalyses L-citrulline + L-aspartate + ATP = 2-(N(omega)-L-arginino)succinate + AMP + diphosphate + H(+). It functions in the pathway amino-acid biosynthesis; L-arginine biosynthesis; L-arginine from L-ornithine and carbamoyl phosphate: step 2/3. The sequence is that of Argininosuccinate synthase from Histophilus somni (strain 2336) (Haemophilus somnus).